Consider the following 424-residue polypeptide: Histidine--tRNA ligase (424 aa).

The protein belongs to the class-II aminoacyl-tRNA synthetase family. In terms of assembly, homodimer.

It is found in the cytoplasm. It carries out the reaction tRNA(His) + L-histidine + ATP = L-histidyl-tRNA(His) + AMP + diphosphate + H(+). This Salmonella paratyphi A (strain ATCC 9150 / SARB42) protein is Histidine--tRNA ligase.